The sequence spans 9702 residues: Nonribosomal peptide synthetase ungA (9702 aa).

The tract at residues 248–647 (EQAQLRPHAP…ARKDTQVKIR (400 aa)) is adenylation 1. The region spanning 775–852 (APQTEMEYRL…MARAAQEKQT (78 aa)) is the Carrier 1 domain. The residue at position 812 (serine 812) is an O-(pantetheine 4'-phosphoryl)serine. The tract at residues 891-1288 (DILPCTPLQE…EAVLRHVCSQ (398 aa)) is condensation 1. An adenylation 2 region spans residues 1330–1730 (QRTQQQPDAP…GRKDTQVKIR (401 aa)). One can recognise a Carrier 2 domain in the interval 1857-1933 (LPQSPMEKSL…RLARREIQTD (77 aa)). Residue serine 1894 is modified to O-(pantetheine 4'-phosphoryl)serine. The segment at 1946 to 2374 (PFALSPIQQF…ERALEGTAVQ (429 aa)) is epimerization 1. The condensation 2 stretch occupies residues 2414–2842 (EDIYPCSPLQ…LDTAILSPQD (429 aa)). The tract at residues 2868–3267 (QVERQPDALA…GRKDTQVKIR (400 aa)) is adenylation 3. A Carrier 3 domain is found at 3397–3473 (APTTEMERHL…EMSQVAKLGS (77 aa)). Serine 3434 carries the post-translational modification O-(pantetheine 4'-phosphoryl)serine. Positions 3512 to 3920 (EDVFPCTPLQ…LLCDASHHQS (409 aa)) are condensation 3. The adenylation 4 stretch occupies residues 3957 to 4361 (KQTQRRSAAQ…GRKDAQVKIR (405 aa)). The region spanning 4491 to 4568 (PPTTDLERQI…LALSVSAAVD (78 aa)) is the Carrier 4 domain. An O-(pantetheine 4'-phosphoryl)serine modification is found at serine 4528. Positions 4583 to 5013 (ALSPIQQMFA…QAAAQALPLL (431 aa)) are epimerization 2. The segment at 5049–5474 (VEDIYPCSPL…ANIISHQDLE (426 aa)) is condensation 4. The tract at residues 5496–5899 (MQQAESQPGA…GRKDNQVKIH (404 aa)) is adenylation 5. The 78-residue stretch at 6033–6110 (TASSPEELEL…LVSHAQGNTA (78 aa)) folds into the Carrier 5 domain. Position 6070 is an O-(pantetheine 4'-phosphoryl)serine (serine 6070). Residues 6127–6551 (ELSPIQQLFF…CKSSLEAAAA (425 aa)) form an epimerization 3 region. The condensation 5 stretch occupies residues 6593–6935 (VEDIYPCAPI…TGISVQGGAA (343 aa)). Residues 7047-7447 (KRPDAPAIDA…GRRDNQVKVR (401 aa)) are adenylation 6. Residues 7575 to 7655 (GPQTEVERLL…RSARTVQGHV (81 aa)) form the Carrier 6 domain. Residue serine 7613 is modified to O-(pantetheine 4'-phosphoryl)serine. Residues 7670-8106 (DLAPVQQMFA…LVTASELLMQ (437 aa)) are epimerization 4. The tract at residues 8144–8588 (VEDIYPCSPI…EVDLSTDHDQ (445 aa)) is condensation 6. The tract at residues 8612 to 9025 (NTVQKQPHST…GRKDSQVKIR (414 aa)) is adenylation 7. Residues 9158–9236 (SPTAPMERRL…LALLVREGDA (79 aa)) enclose the Carrier 7 domain. The residue at position 9196 (serine 9196) is an O-(pantetheine 4'-phosphoryl)serine. The interval 9282–9629 (DVYPTTDLQN…DNLEHDPGTA (348 aa)) is condensation 7.

Belongs to the NRP synthetase family.

It participates in secondary metabolite biosynthesis. Its function is as follows. Nonribosomal peptide synthetase; part of the gene cluster that mediates the biosynthesis of the unguisins, gamma-aminobutyric acid (GABA)-containing fungal cyclic heptapeptides with the amino acid sequence cyclo-(D-Ala1-D-Val2-L-Phe3-D-Val4-D-Ala5-D-Trp6-GABA7) for unguisin A and cyclo-(D-Ala1-D-Val2-L-Leu3-D-Val4-D-Ala5-D-Trp6-GABA7) for unguisin B. UngA is the main enzyme within the cluster which condenses the 7 residues using its respective 7 modules. The terminal condensation domain (Ct) is involved in cyclization with D-alanine and thereby releasing of unguisins A and B. The alanine racemase ungC provides D-alanine, which is then accepted by the first adenylation domain of ungA. Finally, the hydrolase ungD catalyzes the hydrolysis between the D-tryptophan and GABA residues of unguisins A and B to produce the corresponding linear peptides. The sequence is that of Nonribosomal peptide synthetase ungA from Aspergillus violaceofuscus (strain CBS 115571).